The following is a 908-amino-acid chain: Glutamate receptor ionotropic, kainate 2 (908 aa).

Residues 1–31 (MKIIFPILSNPVFRRTVKLLLCLLWIGYSQG) form the signal peptide. Over 32 to 561 (TTHVLRFGGI…VFSFLNPLSP (530 aa)) the chain is Extracellular. N-linked (GlcNAc...) asparagine glycans are attached at residues asparagine 67, asparagine 73, asparagine 275, asparagine 378, asparagine 412, asparagine 423, and asparagine 430. An intrachain disulfide couples cysteine 96 to cysteine 347. L-glutamate is bound by residues proline 516, alanine 518, and arginine 523. A glycan (N-linked (GlcNAc...) asparagine) is linked at asparagine 546. The chain crosses the membrane as a helical span at residues 562–582 (DIWMYILLAYLGVSCVLFVIA). The Cytoplasmic segment spans residues 583–635 (RFSPYEWYNPHPCNPDSDVVENNFTLLNSFWFGVGALMQQGSELMPKALSTRI). The chain crosses the membrane as a helical span at residues 636–656 (VGGIWWFFTLIIISSYTANLA). Residues 657 to 819 (AFLTVERMES…KEASALGVQN (163 aa)) lie on the Extracellular side of the membrane. Alanine 689, threonine 690, and glutamate 738 together coordinate L-glutamate. A disulfide bond links cysteine 750 and cysteine 804. An N-linked (GlcNAc...) asparagine glycan is attached at asparagine 751. The helical transmembrane segment at 820-840 (IGGIFIVLAAGLVLSVFVAVG) threads the bilayer. Residues 841–908 (EFLYKSKKNA…RRLPGKETMA (68 aa)) lie on the Cytoplasmic side of the membrane. 2 positions are modified to phosphoserine; by PKC: serine 846 and serine 868. Lysine 886 is covalently cross-linked (Glycyl lysine isopeptide (Lys-Gly) (interchain with G-Cter in SUMO1)).

Belongs to the glutamate-gated ion channel (TC 1.A.10.1) family. GRIK2 subfamily. As to quaternary structure, homotetramer and heterotetramer with GRIK5. Tetramers may be formed by the dimerization of dimers. Assembles into a kainate-gated homomeric channel that does not bind AMPA. Can form functional heteromeric receptors with GRIK5. Can form functional heteromeric receptors with GRIK3 and GRIK4. Interacts with DLG4. Interacts with NETO2. Interacts (via C-terminus) with KLHL17 (via kelch repeats); the interaction targets GRIK2 for degradation via ubiquitin-proteasome pathway. Post-translationally, sumoylation mediates kainate receptor-mediated endocytosis and regulates synaptic transmission. Sumoylation is enhanced by PIAS3 and desumoylated by SENP1. Ubiquitinated. Ubiquitination regulates the GRIK2 levels at the synapse by leading kainate receptor degradation through proteasome. In terms of processing, phosphorylated by PKC at Ser-868 upon agonist activation, this directly enhance sumoylation. As to expression, expression is higher in cerebellum than in cerebral cortex.

Its subcellular location is the cell membrane. It localises to the postsynaptic cell membrane. It carries out the reaction Ca(2+)(in) = Ca(2+)(out). The enzyme catalyses Na(+)(in) = Na(+)(out). With respect to regulation, cold receptor activity activated by temperatures between 10-19 degrees Celsius. In terms of biological role, ionotropic glutamate receptor that functions as a cation permeable ligand-gated ion channel, gated by L-glutamate and the glutamatergic agonist kainic acid. L-glutamate acts as an excitatory neurotransmitter at many synapses in the central nervous system. Binding of the excitatory neurotransmitter L-glutamate induces a conformation change, leading to the opening of the cation channel, and thereby converts the chemical signal to an electrical impulse. The receptor then desensitizes rapidly and enters a transient inactive state, characterized by the presence of bound agonist. Modulates cell surface expression of NETO2. In association with GRIK3, involved in presynaptic facilitation of glutamate release at hippocampal mossy fiber synapses. Independent of its ionotropic glutamate receptor activity, acts as a thermoreceptor conferring sensitivity to cold temperatures. Functions in dorsal root ganglion neurons. The chain is Glutamate receptor ionotropic, kainate 2 (GRIK2) from Homo sapiens (Human).